The following is a 68-amino-acid chain: U-poneritoxin(01)-Om4a (68 aa).

A signal peptide spans 1–25 (MKPSSLTLAFLVVFMMAIMYNSVQA). A propeptide spanning residues 26–39 (EALADADAEAFAEA) is cleaved from the precursor.

It belongs to the formicidae venom precursor-01 superfamily. Homo- or heterodimer with PLP7 (AC A0A348G6I9); disulfide-linked. Truncated sequences of this peptide have also been found in the venom. It is possible they have been cleaved in the venom. As to expression, expressed by the venom gland.

The protein resides in the secreted. Its function is as follows. This homodimer composed of two cationic amphipathic alpha-helical peptides has antimicrobial activities against E.coli (MIC=3.1 uM), S.aureus (MIC=3.1 uM), and S.cerevisiae (MIC=3.1 uM). It also shows histamine-releasing activity (66.4% at 10 uM) and a weak hemolytic activity (10.5% at 50 uM). This chain is U-poneritoxin(01)-Om4a, found in Odontomachus monticola (Trap-jaw ant).